The chain runs to 310 residues: Homoserine O-acetyltransferase (310 aa).

The active-site Acyl-thioester intermediate is Cys142. Substrate contacts are provided by Lys163 and Ser192. His235 functions as the Proton acceptor in the catalytic mechanism. The active site involves Glu237. Arg249 is a substrate binding site.

Belongs to the MetA family.

Its subcellular location is the cytoplasm. The enzyme catalyses L-homoserine + acetyl-CoA = O-acetyl-L-homoserine + CoA. The protein operates within amino-acid biosynthesis; L-methionine biosynthesis via de novo pathway; O-acetyl-L-homoserine from L-homoserine: step 1/1. Functionally, transfers an acetyl group from acetyl-CoA to L-homoserine, forming acetyl-L-homoserine. The polypeptide is Homoserine O-acetyltransferase (Lachnospira eligens (strain ATCC 27750 / DSM 3376 / VPI C15-48 / C15-B4) (Eubacterium eligens)).